The following is a 474-amino-acid chain: 3-isopropylmalate dehydratase large subunit (474 aa).

3 residues coordinate [4Fe-4S] cluster: Cys-350, Cys-415, and Cys-418.

This sequence belongs to the aconitase/IPM isomerase family. LeuC type 1 subfamily. Heterodimer of LeuC and LeuD. It depends on [4Fe-4S] cluster as a cofactor.

It catalyses the reaction (2R,3S)-3-isopropylmalate = (2S)-2-isopropylmalate. It functions in the pathway amino-acid biosynthesis; L-leucine biosynthesis; L-leucine from 3-methyl-2-oxobutanoate: step 2/4. Catalyzes the isomerization between 2-isopropylmalate and 3-isopropylmalate, via the formation of 2-isopropylmaleate. The protein is 3-isopropylmalate dehydratase large subunit of Phenylobacterium zucineum (strain HLK1).